The sequence spans 177 residues: Translation initiation factor IF-3 (177 aa).

The protein belongs to the IF-3 family. In terms of assembly, monomer.

It is found in the cytoplasm. Functionally, IF-3 binds to the 30S ribosomal subunit and shifts the equilibrium between 70S ribosomes and their 50S and 30S subunits in favor of the free subunits, thus enhancing the availability of 30S subunits on which protein synthesis initiation begins. This is Translation initiation factor IF-3 from Synechocystis sp. (strain ATCC 27184 / PCC 6803 / Kazusa).